The primary structure comprises 318 residues: Mediator of RNA polymerase II transcription subunit 3 (318 aa).

Positions 134 to 156 are enriched in polar residues; it reads SAAGITKTSSGNDGNTTGSTANT. Residues 134 to 225 form a disordered region; that stretch reads SAAGITKTSS…PSLKQIPNTQ (92 aa). Over residues 192–217 the composition is skewed to low complexity; sequence HTGPATAPTTSNSAASAAAAAANTPS.

It belongs to the Mediator complex subunit 3 family. As to quaternary structure, component of the Mediator complex.

Its subcellular location is the nucleus. Component of the Mediator complex, a coactivator involved in regulated gene transcription of nearly all RNA polymerase II-dependent genes. Mediator functions as a bridge to convey information from gene-specific regulatory proteins to the basal RNA polymerase II transcription machinery. Mediator is recruited to promoters by direct interactions with regulatory proteins and serves as a scaffold for the assembly of a functional preinitiation complex with RNA polymerase II and the general transcription factors. In Kluyveromyces lactis (strain ATCC 8585 / CBS 2359 / DSM 70799 / NBRC 1267 / NRRL Y-1140 / WM37) (Yeast), this protein is Mediator of RNA polymerase II transcription subunit 3 (PGD1).